Here is a 372-residue protein sequence, read N- to C-terminus: Transaldolase 2 (372 aa).

K140 acts as the Schiff-base intermediate with substrate in catalysis.

This sequence belongs to the transaldolase family. Type 2 subfamily.

It localises to the cytoplasm. The enzyme catalyses D-sedoheptulose 7-phosphate + D-glyceraldehyde 3-phosphate = D-erythrose 4-phosphate + beta-D-fructose 6-phosphate. It participates in carbohydrate degradation; pentose phosphate pathway; D-glyceraldehyde 3-phosphate and beta-D-fructose 6-phosphate from D-ribose 5-phosphate and D-xylulose 5-phosphate (non-oxidative stage): step 2/3. Transaldolase is important for the balance of metabolites in the pentose-phosphate pathway. The polypeptide is Transaldolase 2 (Streptomyces avermitilis (strain ATCC 31267 / DSM 46492 / JCM 5070 / NBRC 14893 / NCIMB 12804 / NRRL 8165 / MA-4680)).